The sequence spans 292 residues: Homoserine kinase (292 aa).

Position 84–94 (84–94) interacts with ATP; sequence PLSRGLGSSSA.

The protein belongs to the GHMP kinase family. Homoserine kinase subfamily.

It localises to the cytoplasm. It catalyses the reaction L-homoserine + ATP = O-phospho-L-homoserine + ADP + H(+). It functions in the pathway amino-acid biosynthesis; L-threonine biosynthesis; L-threonine from L-aspartate: step 4/5. Functionally, catalyzes the ATP-dependent phosphorylation of L-homoserine to L-homoserine phosphate. The polypeptide is Homoserine kinase (Campylobacter jejuni subsp. jejuni serotype O:23/36 (strain 81-176)).